A 132-amino-acid chain; its full sequence is Small ribosomal subunit protein uS8 (132 aa).

It belongs to the universal ribosomal protein uS8 family. In terms of assembly, part of the 30S ribosomal subunit. Contacts proteins S5 and S12.

In terms of biological role, one of the primary rRNA binding proteins, it binds directly to 16S rRNA central domain where it helps coordinate assembly of the platform of the 30S subunit. In Psychrobacter sp. (strain PRwf-1), this protein is Small ribosomal subunit protein uS8.